Consider the following 68-residue polypeptide: Large ribosomal subunit protein uL29 (68 aa).

The protein belongs to the universal ribosomal protein uL29 family.

The polypeptide is Large ribosomal subunit protein uL29 (Wigglesworthia glossinidia brevipalpis).